The chain runs to 146 residues: Large ribosomal subunit protein uL15 (146 aa).

The segment at 1-51 (MQLNTIKPAEGSKKNRRHVGRGIGSGLGKTAGRGHKGQKSRSGGFHKVGFE) is disordered. Residues 21–31 (RGIGSGLGKTA) are compositionally biased toward gly residues.

The protein belongs to the universal ribosomal protein uL15 family. Part of the 50S ribosomal subunit.

Functionally, binds to the 23S rRNA. This is Large ribosomal subunit protein uL15 from Polynucleobacter necessarius subsp. necessarius (strain STIR1).